The following is a 312-amino-acid chain: Telomere-binding protein OPG077 (312 aa).

It belongs to the orthopoxvirus OPG077 family.

It is found in the virion. DNA-binding protein which binds to the hairpin form of the viral telomeric sequence. Required for the production of mature virions (MV). This Vaccinia virus (strain L-IVP) (VACV) protein is Telomere-binding protein OPG077 (OPG077).